A 262-amino-acid polypeptide reads, in one-letter code: MNILVVKTPEELAEVGYKLIEEVVKTKENPTLGMATGSSPLGIYAEMRKNKLDTSRVTTVNLDEYVNLPHEDKNSYHYFMQEQLFDHLPFKQTYVPNGMASDLEEECKRYEGILAANPVDLQILGIGENGHIGFNEPGTPFNSPTNIVELTESTRQANLRFFEKEEDVPTHAITMGIGSIMKAKQVLLVAMGAKKAEAVKELLQGEYSEECPATVLQRHPNVTVIADQEALSLCSEAIADEHRQVFTISDLLSDSRVGETAN.

The active-site Proton acceptor; for enolization step is D63. N129 serves as the catalytic For ring-opening step. H131 (proton acceptor; for ring-opening step) is an active-site residue. The active-site For ring-opening step is the E136.

It belongs to the glucosamine/galactosamine-6-phosphate isomerase family. NagB subfamily.

The enzyme catalyses alpha-D-glucosamine 6-phosphate + H2O = beta-D-fructose 6-phosphate + NH4(+). It participates in amino-sugar metabolism; N-acetylneuraminate degradation; D-fructose 6-phosphate from N-acetylneuraminate: step 5/5. Its function is as follows. Catalyzes the reversible isomerization-deamination of glucosamine 6-phosphate (GlcN6P) to form fructose 6-phosphate (Fru6P) and ammonium ion. This is Glucosamine-6-phosphate deaminase from Bacillus cereus (strain G9842).